Consider the following 932-residue polypeptide: Protocadherin gamma-A12 (932 aa).

The signal sequence occupies residues 1–29 (MIPARLHRDYKGLVLLGILLGTLWETGCT). Cadherin domains lie at 30 to 133 (QIRY…APYF), 134 to 242 (RESE…APAF), 243 to 347 (AQPE…APEV), 348 to 452 (VLTS…PPVF), 453 to 562 (PQAS…APEI), and 570 to 683 (DGST…SPAN). At 30 to 692 (QIRYSVPEEL…NSETSDLTLY (663 aa)) the chain is on the extracellular side. N265, N419, and N545 each carry an N-linked (GlcNAc...) asparagine glycan. Residues 693-713 (LVVAVAAVSCVFLAFVILLLA) traverse the membrane as a helical segment. The Cytoplasmic segment spans residues 714-932 (LRLRRWHKSR…KKKSGKKEKK (219 aa)). 2 disordered regions span residues 803–841 (SHGL…WPNN) and 902–932 (ATLT…KEKK). The segment covering 816 to 841 (WRFSQAQRPGTSGSQNGDDTGTWPNN) has biased composition (polar residues). Residues 922-932 (NKKKSGKKEKK) are compositionally biased toward basic residues.

Its subcellular location is the cell membrane. Potential calcium-dependent cell-adhesion protein. May be involved in the establishment and maintenance of specific neuronal connections in the brain. In Homo sapiens (Human), this protein is Protocadherin gamma-A12 (PCDHGA12).